A 79-amino-acid chain; its full sequence is Protein VdcD (79 aa).

Functionally, involved in the non-oxidative decarboxylation and detoxification of phenolic derivatives under both aerobic and anaerobic conditions, however the precise biochemical function of VdcD in metabolism of phenolic acid is unknown. The sequence is that of Protein VdcD from Streptomyces sp. (strain D7).